A 171-amino-acid polypeptide reads, in one-letter code: UPF0725 protein At3g25080 (171 aa).

Belongs to the UPF0725 (EMB2204) family.

The sequence is that of UPF0725 protein At3g25080 from Arabidopsis thaliana (Mouse-ear cress).